The following is a 175-amino-acid chain: Large ribosomal subunit protein bL17m (175 aa).

A mitochondrion-targeting transit peptide spans 1–8 (MRLSVCAA). Residues 155-175 (DLSQSQEASNHSSHTAQTPGI) are disordered. Positions 157–175 (SQSQEASNHSSHTAQTPGI) are enriched in polar residues.

The protein belongs to the bacterial ribosomal protein bL17 family. In terms of assembly, component of the mitochondrial ribosome large subunit (39S) which comprises a 16S rRNA and about 50 distinct proteins.

It is found in the mitochondrion. The sequence is that of Large ribosomal subunit protein bL17m (MRPL17) from Pongo abelii (Sumatran orangutan).